We begin with the raw amino-acid sequence, 428 residues long: C4-dicarboxylate transport protein (428 aa).

8 consecutive transmembrane segments (helical) span residues 8–28 (SLYF…HFYP), 44–64 (LIKM…IAGM), 76–96 (VALL…LIIV), 142–162 (IGAF…LFGF), 184–204 (VIFG…FGAM), 222–242 (LIIC…GSIA), 326–346 (IVHQ…AAGV), and 352–372 (IVLA…LALI).

The protein belongs to the dicarboxylate/amino acid:cation symporter (DAACS) (TC 2.A.23) family.

It localises to the cell inner membrane. Its function is as follows. Responsible for the transport of dicarboxylates such as succinate, fumarate, and malate from the periplasm across the membrane. The polypeptide is C4-dicarboxylate transport protein (Escherichia coli O139:H28 (strain E24377A / ETEC)).